Consider the following 332-residue polypeptide: MKAIEWRNNRLIILDQTLLPLEEKYLELNDYHAVAEAIKTLRIRGAPSIGVAAAYGIALGALSIETRYCSEFLPLYQQISAEIASTRPTAKNLFMAVERMDHVVASGTDVLQVKISLVDEALKIHREEEEASRKISTFGADLIQPGWTVLTHCNAGPLATAGYGTALGVIIAAHQQNKGISAFATETRPLLQGARLTALELKEAGVPFKLITDSMAGHFMKKGVINAVVVGADRIARNGDTANKIGTYSLAVLALAHGIPFYVAAPSSTFDKSIESGNDIVIEERKPEEITYLRGQRIAPENIDVANPAFDVTPANLIAAFITENGIIRRGE.

Substrate contacts are provided by residues 44–46 (RGA), arginine 87, and glutamine 192. Residue aspartate 233 is the Proton donor of the active site. 243 to 244 (NK) provides a ligand contact to substrate.

Belongs to the eIF-2B alpha/beta/delta subunits family. MtnA subfamily.

It catalyses the reaction 5-(methylsulfanyl)-alpha-D-ribose 1-phosphate = 5-(methylsulfanyl)-D-ribulose 1-phosphate. The protein operates within amino-acid biosynthesis; L-methionine biosynthesis via salvage pathway; L-methionine from S-methyl-5-thio-alpha-D-ribose 1-phosphate: step 1/6. Catalyzes the interconversion of methylthioribose-1-phosphate (MTR-1-P) into methylthioribulose-1-phosphate (MTRu-1-P). The polypeptide is Methylthioribose-1-phosphate isomerase (Dehalococcoides mccartyi (strain CBDB1)).